The chain runs to 574 residues: Putative thiamine pyrophosphate-containing protein YdaP (574 aa).

The stretch at aspartate 28–alanine 55 forms a coiled coil. Glutamate 52 lines the thiamine diphosphate pocket. Residues isoleucine 256 to serine 277 and aspartate 294 to aspartate 313 each bind FAD. The interval threonine 384 to asparagine 464 is thiamine pyrophosphate binding. Mg(2+)-binding residues include aspartate 435 and asparagine 462.

This sequence belongs to the TPP enzyme family. It depends on Mg(2+) as a cofactor. The cofactor is thiamine diphosphate.

This chain is Putative thiamine pyrophosphate-containing protein YdaP (ydaP), found in Bacillus subtilis (strain 168).